The sequence spans 206 residues: Large ribosomal subunit protein uL4 (206 aa).

The tract at residues K65–G85 is disordered.

Belongs to the universal ribosomal protein uL4 family. Part of the 50S ribosomal subunit.

Functionally, one of the primary rRNA binding proteins, this protein initially binds near the 5'-end of the 23S rRNA. It is important during the early stages of 50S assembly. It makes multiple contacts with different domains of the 23S rRNA in the assembled 50S subunit and ribosome. In terms of biological role, forms part of the polypeptide exit tunnel. This is Large ribosomal subunit protein uL4 from Parvibaculum lavamentivorans (strain DS-1 / DSM 13023 / NCIMB 13966).